A 208-amino-acid chain; its full sequence is Adenylyl-sulfate kinase (208 aa).

31–38 (GLSGSGKS) serves as a coordination point for ATP. The active-site Phosphoserine intermediate is the Ser-105.

This sequence belongs to the APS kinase family.

It catalyses the reaction adenosine 5'-phosphosulfate + ATP = 3'-phosphoadenylyl sulfate + ADP + H(+). It participates in sulfur metabolism; hydrogen sulfide biosynthesis; sulfite from sulfate: step 2/3. Catalyzes the synthesis of activated sulfate. This Pseudomonas entomophila (strain L48) protein is Adenylyl-sulfate kinase.